Consider the following 131-residue polypeptide: Hyastatin (131 aa).

A signal peptide spans 1 to 16; that stretch reads MRVLLILVSLAALAHA. 3 cysteine pairs are disulfide-bonded: cysteine 103-cysteine 117, cysteine 107-cysteine 124, and cysteine 118-cysteine 125. The residue at position 130 (lysine 130) is a Lysine amide.

Strongly expressed in hemocytes, with weaker expression in gills and epidermis. Expressed at low levels in hepatopancreas.

The protein resides in the cytoplasmic granule. Its function is as follows. Antimicrobial peptide. Has strong antibacterial activity against the Gram-positive bacterium C.glutamicum (MIC=0.4 uM) and the Gram-negative bacterium E.coli (MIC=12.5 uM). Has weak antibacterial activity against the Gram-positive bacterium S.aureus (MIC&gt;50 uM) and the Gram-negative bacterium P.aeruginosa (MIC&gt;50 uM). Has antifungal activity against S.cerevisiae (MIC=12.5) and C.albicans (MIC=6.3 uM). Has weak antifungal activity against the mold B.cinerea. Presents chitin-binding activity. The protein is Hyastatin of Hyas araneus (Atlantic lyre crab).